The sequence spans 464 residues: Argininosuccinate lyase (464 aa).

It belongs to the lyase 1 family. Argininosuccinate lyase subfamily.

Its subcellular location is the cytoplasm. It carries out the reaction 2-(N(omega)-L-arginino)succinate = fumarate + L-arginine. Its pathway is amino-acid biosynthesis; L-arginine biosynthesis; L-arginine from L-ornithine and carbamoyl phosphate: step 3/3. In Pseudomonas putida (strain W619), this protein is Argininosuccinate lyase.